A 348-amino-acid chain; its full sequence is EGF-like domain-containing protein 1 (348 aa).

An N-terminal signal peptide occupies residues 1–19 (MFYLSTFMTIVISLSLVSC). An EGF-like domain is found at 60–92 (TGSNCTVTCQNNGKCYDGSKCLCSSDYTGDLCE). Intrachain disulfides connect Cys64–Cys74, Cys68–Cys80, and Cys82–Cys91. A ZP domain is found at 99 to 342 (RCTLDAVVFE…PTCAAPXVGQ (244 aa)).

In terms of tissue distribution, prismatic layer of shell (at protein level). Expressed primarily in the mantle with highest level in the mantle edge and lower level in the mantle pallium.

The protein localises to the secreted. This chain is EGF-like domain-containing protein 1, found in Pinctada maxima (Silver-lipped pearl oyster).